Here is a 220-residue protein sequence, read N- to C-terminus: Fructose-6-phosphate aldolase (220 aa).

Lysine 85 (schiff-base intermediate with substrate) is an active-site residue.

It belongs to the transaldolase family. Type 3A subfamily. In terms of assembly, homodecamer.

It localises to the cytoplasm. It catalyses the reaction beta-D-fructose 6-phosphate = dihydroxyacetone + D-glyceraldehyde 3-phosphate. Its function is as follows. Catalyzes the reversible formation of fructose 6-phosphate from dihydroxyacetone and D-glyceraldehyde 3-phosphate via an aldolization reaction. The sequence is that of Fructose-6-phosphate aldolase from Enterobacter sp. (strain 638).